The chain runs to 401 residues: Deoxyhypusine synthase-like protein (401 aa).

Belongs to the deoxyhypusine synthase family.

This Thermosynechococcus vestitus (strain NIES-2133 / IAM M-273 / BP-1) protein is Deoxyhypusine synthase-like protein.